A 1855-amino-acid polypeptide reads, in one-letter code: Unconventional myosin-Va (1855 aa).

Ala-2 is subject to N-acetylalanine. Residues 8–60 enclose the Myosin N-terminal SH3-like domain; the sequence is TKFARVWIPDPEEVWKSAELLKDYKPGDKVLLLHLEEGKDLEYHLDPKTKELP. A Myosin motor domain is found at 69 to 763; it reads VGENDLTALS…QVAYLEKLRA (695 aa). ATP is bound at residue 163-170; that stretch reads GESGAGKT. The interval 598 to 631 is disordered; it reads AISPTSATSSGRTPLTRTPAKPTKGRPGQMAKEH. Ser-600 is modified (phosphoserine). Positions 600-613 are enriched in polar residues; it reads SPTSATSSGRTPLT. The actin-binding stretch occupies residues 643-665; the sequence is LHLLMETLNATTPHYVRCIKPND. 6 IQ domains span residues 766-788, 789-818, 814-836, 837-861, 862-883, and 885-914; these read LRAA…KYLR, MRKA…TKAA, RTKA…RYKI, RRAA…RKIL, REHK…THYK, and SMHA…EARS. Coiled-coil stretches lie at residues 914 to 1237 and 1338 to 1445; these read SVER…APEV and VYEG…ELEV. Phosphothreonine is present on Thr-1032. A phosphoserine mark is found at Ser-1452 and Ser-1652. In terms of domain architecture, Dilute spans 1534–1810; that stretch reads TSTINSIKKV…IRTIQMRLRD (277 aa). Thr-1760 is modified (phosphothreonine).

Belongs to the TRAFAC class myosin-kinesin ATPase superfamily. Myosin family. May be a homodimer, which associates with multiple calmodulin or myosin light chains. Interacts with RIPL2, the interaction is required for its role in dendrite formation. Interacts with MLPH. Interacts with SYTL4. Interacts with MYRIP. Interacts with RAB10; mediates the transport to the plasma membrane of SLC2A4/GLUT4 storage vesicles. Interacts with FMR1; this interaction occurs in association with polyribosome. As to expression, detected in melanocytes.

The catalysed reaction is ATP + H2O = ADP + phosphate + H(+). Processive actin-based motor that can move in large steps approximating the 36-nm pseudo-repeat of the actin filament. Can hydrolyze ATP in the presence of actin, which is essential for its function as a motor protein. Involved in melanosome transport. Also mediates the transport of vesicles to the plasma membrane. May also be required for some polarization process involved in dendrite formation. The polypeptide is Unconventional myosin-Va (MYO5A) (Homo sapiens (Human)).